The chain runs to 120 residues: Large ribosomal subunit protein uL18 (120 aa).

This sequence belongs to the universal ribosomal protein uL18 family. Part of the 50S ribosomal subunit; part of the 5S rRNA/L5/L18/L25 subcomplex. Contacts the 5S and 23S rRNAs.

Functionally, this is one of the proteins that bind and probably mediate the attachment of the 5S RNA into the large ribosomal subunit, where it forms part of the central protuberance. The chain is Large ribosomal subunit protein uL18 from Bacillus pumilus (strain SAFR-032).